The primary structure comprises 337 residues: Tryptophan--tRNA ligase (337 aa).

Residues 11–13 (QPT) and 19–20 (GN) each bind ATP. Positions 12-20 (PTGALHLGN) match the 'HIGH' region motif. Asp135 provides a ligand contact to L-tryptophan. Residues 147 to 149 (GED), Val191, and 200 to 204 (KMSKS) contribute to the ATP site. The short motif at 200 to 204 (KMSKS) is the 'KMSKS' region element.

This sequence belongs to the class-I aminoacyl-tRNA synthetase family. As to quaternary structure, homodimer.

Its subcellular location is the cytoplasm. The enzyme catalyses tRNA(Trp) + L-tryptophan + ATP = L-tryptophyl-tRNA(Trp) + AMP + diphosphate + H(+). In terms of biological role, catalyzes the attachment of tryptophan to tRNA(Trp). The chain is Tryptophan--tRNA ligase from Parasynechococcus marenigrum (strain WH8102).